Reading from the N-terminus, the 121-residue chain is Large ribosomal subunit protein bL19 (121 aa).

The protein belongs to the bacterial ribosomal protein bL19 family.

Its function is as follows. This protein is located at the 30S-50S ribosomal subunit interface and may play a role in the structure and function of the aminoacyl-tRNA binding site. The polypeptide is Large ribosomal subunit protein bL19 (Mesomycoplasma hyopneumoniae (strain 7448) (Mycoplasma hyopneumoniae)).